Reading from the N-terminus, the 112-residue chain is Large ribosomal subunit protein uL22 (112 aa).

It belongs to the universal ribosomal protein uL22 family. As to quaternary structure, part of the 50S ribosomal subunit.

Functionally, this protein binds specifically to 23S rRNA; its binding is stimulated by other ribosomal proteins, e.g. L4, L17, and L20. It is important during the early stages of 50S assembly. It makes multiple contacts with different domains of the 23S rRNA in the assembled 50S subunit and ribosome. In terms of biological role, the globular domain of the protein is located near the polypeptide exit tunnel on the outside of the subunit, while an extended beta-hairpin is found that lines the wall of the exit tunnel in the center of the 70S ribosome. This Finegoldia magna (strain ATCC 29328 / DSM 20472 / WAL 2508) (Peptostreptococcus magnus) protein is Large ribosomal subunit protein uL22.